A 600-amino-acid polypeptide reads, in one-letter code: Putative heme-binding protein NP_2262A (600 aa).

A heme-binding site is contributed by histidine 180. The disordered stretch occupies residues 261–289; sequence TSETGHGGADSQTSSESSGGRPSTDPSHD. Polar residues predominate over residues 270–285; that stretch reads DSQTSSESSGGRPSTD. The region spanning 510–598 is the ABM domain; that stretch reads GTMGMFYTVK…VLADRPRHVF (89 aa).

It in the N-terminal section; belongs to the ChdC family.

In Natronomonas pharaonis (strain ATCC 35678 / DSM 2160 / CIP 103997 / JCM 8858 / NBRC 14720 / NCIMB 2260 / Gabara) (Halobacterium pharaonis), this protein is Putative heme-binding protein NP_2262A.